The following is a 104-amino-acid chain: Replication restart protein PriB (104 aa).

The SSB domain maps to 2 to 101; that stretch reads TNRLVLSGTV…LHAEQIELID (100 aa). Residues C48 and C80 are joined by a disulfide bond. The L45 loop signature appears at 82 to 89; sequence KAKNGLSK.

The protein belongs to the PriB family. Homodimer. Primosome assembly occurs via a 'hand-off' mechanism. PriA binds to replication forks, subsequently PriB then DnaT bind; DnaT then displaces ssDNA to generate the helicase loading substrate, which allows DnaC to load helicase DnaB onto the fork. ssDNA is displaced from the PriB-ssDNA complex by DnaT. In a PriA-PriB-replication fork structure, movement of the PriA CRR domain exposes a surface to which PriB binds and contacts ssDNA emerging from the PriA pore. Binds PriA; binding is improved in the presence of ssDNA. Weakly binds DnaT; binding is improved in the presence of ssDNA; as DnaT levels increase PriB dissociates from ssDNA. Component of the replication restart primosome, which is composed of PriA, PriB, PriC, DnaB and DnaT; DnaG primase associates transiently with this complex. Component of the preprimosomal complex composed of one monomer of PriC and DnaT, two monomers of PriA, two dimers of PriB and one hexamer of DnaB. In terms of processing, an intersubunit disulfide bond is seen in some crystals.

Functionally, involved in the restart of stalled replication forks, which reloads the replicative helicase (DnaB) on sites other than the origin of replication; the PriA-PriB pathway is the major replication restart pathway. There are several restart pathways, the PriA-PriB pathway is subdivided into 2 distinct pathways. priB and priC have redundant roles in the cell. During primosome assembly it facilitates complex formation between PriA and DnaT on DNA; stabilizes PriA on DNA, presumably by preventing or inhibiting PriA DNA translocation activity. Forms a branched DNA-PriA-PriB complex when the lagging strand is single-stranded (ss)DNA. Binds ssDNA in the presence and absence of ssDNA DNA-binding protein (SSB), does not bind branched structures. DNA binding, forming spiral filaments on ssDNA, is cooperative. Stimulates the helicase activity of PriA. The homodimer binds 12 nucleotides of ssDNA. Binds homo-pyrimidine tracts better than homo-purine tracts. Its function is as follows. Genetic interactions among priB, dam, lexA, nagC, polA, rdgB, rdgB, rep and uup link the PriA-PriB replication restart pathway to DNA double-strand break repair. The sequence is that of Replication restart protein PriB from Escherichia coli (strain K12).